A 171-amino-acid chain; its full sequence is Co-chaperone protein HscB (171 aa).

The J domain occupies 2–74 (DYFTLFGLPA…LMRAEYLLSL (73 aa)).

Belongs to the HscB family. In terms of assembly, interacts with HscA and stimulates its ATPase activity. Interacts with IscU.

Functionally, co-chaperone involved in the maturation of iron-sulfur cluster-containing proteins. Seems to help targeting proteins to be folded toward HscA. The protein is Co-chaperone protein HscB of Shigella flexneri serotype 5b (strain 8401).